Here is a 111-residue protein sequence, read N- to C-terminus: Probable 4-amino-4-deoxy-L-arabinose-phosphoundecaprenol flippase subunit ArnE (111 aa).

The Cytoplasmic portion of the chain corresponds to 1-35 (MIWLTLVFASLLSVAGQLCQKQATCFVAISKRRKH). Residues 36–56 (IVLWLGLALACLGLAMVLWLL) form a helical membrane-spanning segment. The region spanning 40–109 (LGLALACLGL…IIGGIVILGS (70 aa)) is the EamA domain. Over 57–60 (VLQN) the chain is Periplasmic. A helical membrane pass occupies residues 61–81 (VPVGIAYPMLSLNFVWVTLAA). Over 82–87 (VKLWHE) the chain is Cytoplasmic. Residues 88–108 (PVSPRHWCGVAFIIGGIVILG) traverse the membrane as a helical segment. The Periplasmic portion of the chain corresponds to 109–111 (STV).

The protein belongs to the ArnE family. Heterodimer of ArnE and ArnF.

The protein localises to the cell inner membrane. It participates in bacterial outer membrane biogenesis; lipopolysaccharide biosynthesis. In terms of biological role, translocates 4-amino-4-deoxy-L-arabinose-phosphoundecaprenol (alpha-L-Ara4N-phosphoundecaprenol) from the cytoplasmic to the periplasmic side of the inner membrane. The protein is Probable 4-amino-4-deoxy-L-arabinose-phosphoundecaprenol flippase subunit ArnE of Escherichia coli O157:H7.